A 129-amino-acid polypeptide reads, in one-letter code: Glycine cleavage system H protein (129 aa).

Residues 23-104 (SVTVGITHHA…AYTAWLFKIK (82 aa)) form the Lipoyl-binding domain. Lys-64 is modified (N6-lipoyllysine).

Belongs to the GcvH family. The glycine cleavage system is composed of four proteins: P, T, L and H. The cofactor is (R)-lipoate.

The glycine cleavage system catalyzes the degradation of glycine. The H protein shuttles the methylamine group of glycine from the P protein to the T protein. This chain is Glycine cleavage system H protein, found in Thiobacillus denitrificans (strain ATCC 25259 / T1).